Here is a 225-residue protein sequence, read N- to C-terminus: Cytidylate kinase (225 aa).

Glycine 11 to threonine 19 serves as a coordination point for ATP.

It belongs to the cytidylate kinase family. Type 1 subfamily.

The protein resides in the cytoplasm. The catalysed reaction is CMP + ATP = CDP + ADP. It carries out the reaction dCMP + ATP = dCDP + ADP. The chain is Cytidylate kinase from Bacillus anthracis (strain A0248).